The primary structure comprises 119 residues: Holo-[acyl-carrier-protein] synthase (119 aa).

The Mg(2+) site is built by Asp5 and Glu51.

The protein belongs to the P-Pant transferase superfamily. AcpS family. Mg(2+) serves as cofactor.

It is found in the cytoplasm. The enzyme catalyses apo-[ACP] + CoA = holo-[ACP] + adenosine 3',5'-bisphosphate + H(+). In terms of biological role, transfers the 4'-phosphopantetheine moiety from coenzyme A to a Ser of acyl-carrier-protein. The protein is Holo-[acyl-carrier-protein] synthase of Helicobacter pylori (strain J99 / ATCC 700824) (Campylobacter pylori J99).